We begin with the raw amino-acid sequence, 150 residues long: 3-hydroxyacyl-[acyl-carrier-protein] dehydratase FabZ (150 aa).

Histidine 54 is an active-site residue.

It belongs to the thioester dehydratase family. FabZ subfamily.

It is found in the cytoplasm. The enzyme catalyses a (3R)-hydroxyacyl-[ACP] = a (2E)-enoyl-[ACP] + H2O. Involved in unsaturated fatty acids biosynthesis. Catalyzes the dehydration of short chain beta-hydroxyacyl-ACPs and long chain saturated and unsaturated beta-hydroxyacyl-ACPs. The chain is 3-hydroxyacyl-[acyl-carrier-protein] dehydratase FabZ from Colwellia psychrerythraea (strain 34H / ATCC BAA-681) (Vibrio psychroerythus).